The primary structure comprises 327 residues: DNA repair and recombination protein RadA (327 aa).

113 to 120 (GEFGSGKS) contacts ATP.

It belongs to the eukaryotic RecA-like protein family.

Its function is as follows. Involved in DNA repair and in homologous recombination. Binds and assemble on single-stranded DNA to form a nucleoprotein filament. Hydrolyzes ATP in a ssDNA-dependent manner and promotes DNA strand exchange between homologous DNA molecules. This Ignicoccus hospitalis (strain KIN4/I / DSM 18386 / JCM 14125) protein is DNA repair and recombination protein RadA.